The chain runs to 360 residues: Aminomethyltransferase (360 aa).

Belongs to the GcvT family. The glycine cleavage system is composed of four proteins: P, T, L and H.

The catalysed reaction is N(6)-[(R)-S(8)-aminomethyldihydrolipoyl]-L-lysyl-[protein] + (6S)-5,6,7,8-tetrahydrofolate = N(6)-[(R)-dihydrolipoyl]-L-lysyl-[protein] + (6R)-5,10-methylene-5,6,7,8-tetrahydrofolate + NH4(+). Functionally, the glycine cleavage system catalyzes the degradation of glycine. This Legionella pneumophila (strain Corby) protein is Aminomethyltransferase.